The primary structure comprises 124 residues: Holo-[acyl-carrier-protein] synthase (124 aa).

Mg(2+) contacts are provided by aspartate 7 and glutamate 55.

This sequence belongs to the P-Pant transferase superfamily. AcpS family. Requires Mg(2+) as cofactor.

The protein resides in the cytoplasm. The catalysed reaction is apo-[ACP] + CoA = holo-[ACP] + adenosine 3',5'-bisphosphate + H(+). In terms of biological role, transfers the 4'-phosphopantetheine moiety from coenzyme A to a Ser of acyl-carrier-protein. The chain is Holo-[acyl-carrier-protein] synthase from Borreliella burgdorferi (strain ATCC 35210 / DSM 4680 / CIP 102532 / B31) (Borrelia burgdorferi).